Here is a 65-residue protein sequence, read N- to C-terminus: MRTTVTVDDALLAKAAELTGVKEKSTLLREGLQTLVRVESARRLAALGGTDPQATAAPRRRTSPR.

The interval 46 to 65 is disordered; the sequence is ALGGTDPQATAAPRRRTSPR.

Its function is as follows. Antitoxin component of a type II toxin-antitoxin (TA) system. The polypeptide is Antitoxin VapB32 (vapB32) (Mycobacterium tuberculosis (strain CDC 1551 / Oshkosh)).